The primary structure comprises 500 residues: NAD(P)H-quinone oxidoreductase chain 4, chloroplastic (500 aa).

The next 14 helical transmembrane spans lie at 4–24, 37–57, 87–107, 113–130, 134–154, 167–187, 211–231, 242–262, 274–294, 313–333, 334–354, 386–406, 417–437, and 462–482; these read FPWL…IFFL, ISIC…HFQL, LGSI…AWPI, LFYF…GLFS, LLLF…LLSM, FILY…GMGL, ILLY…IPLH, HYST…YGLI, YLFS…AALT, MGFI…GAIL, QILS…TASD, LALP…GLIT, LITF…LSML, and LFIL…PDFV.

Belongs to the complex I subunit 4 family.

Its subcellular location is the plastid. The protein localises to the chloroplast thylakoid membrane. The catalysed reaction is a plastoquinone + NADH + (n+1) H(+)(in) = a plastoquinol + NAD(+) + n H(+)(out). The enzyme catalyses a plastoquinone + NADPH + (n+1) H(+)(in) = a plastoquinol + NADP(+) + n H(+)(out). The protein is NAD(P)H-quinone oxidoreductase chain 4, chloroplastic (ndhD) of Hordeum vulgare (Barley).